The chain runs to 1830 residues: Dedicator of cytokinesis protein 2 (1830 aa).

The 62-residue stretch at 8–69 (DKERHGVAIY…PKSFIHIKEV (62 aa)) folds into the SH3 domain. Lysine 304 carries the post-translational modification N6-acetyllysine. Residues 423–607 (RNDIYITLLQ…DVFSISTLVC (185 aa)) form the C2 DOCK-type domain. 2 positions are modified to phosphoserine: serine 588 and serine 593. Residue lysine 738 is modified to N6-acetyllysine. The tract at residues 939-1476 (CMTAILNQMG…TSFVTAYKLP (538 aa)) is interaction with CRKL. The DOCKER domain occupies 1211–1622 (YKDNNREEMY…VEKEYGVREM (412 aa)). A compositionally biased stretch (polar residues) spans 1651-1665 (MNSDCSTPSKPTSES). Positions 1651 to 1704 (MNSDCSTPSKPTSESFDLELASPKTPRVEQEEPISPGSTLPEVKLRRSKKRTKR) are disordered. Serine 1685, serine 1706, serine 1731, and serine 1784 each carry phosphoserine.

This sequence belongs to the DOCK family. As to quaternary structure, homodimer. Interacts with RAC1 and RAC2. Interacts with CRKL and VAV. Interacts with CD3Z. Specifically expressed in hematopoietic cells. Highly expressed in peripheral blood leukocytes, and expressed at intermediate level in thymus and spleen. Expressed at very low level in the small intestine and colon.

The protein resides in the endomembrane system. The protein localises to the cytoplasm. It localises to the cytoskeleton. In terms of biological role, involved in cytoskeletal rearrangements required for lymphocyte migration in response of chemokines. Activates RAC1 and RAC2, but not CDC42, by functioning as a guanine nucleotide exchange factor (GEF), which exchanges bound GDP for free GTP. May also participate in IL2 transcriptional activation via the activation of RAC2. The protein is Dedicator of cytokinesis protein 2 (DOCK2) of Homo sapiens (Human).